The following is a 387-amino-acid chain: 1-deoxy-D-xylulose 5-phosphate reductoisomerase (387 aa).

Residues threonine 11, glycine 12, serine 13, isoleucine 14, glycine 37, arginine 38, glutamine 39, and asparagine 127 each contribute to the NADPH site. Lysine 128 is a 1-deoxy-D-xylulose 5-phosphate binding site. Glutamate 129 contacts NADPH. Aspartate 153 serves as a coordination point for Mn(2+). Residues serine 154, glutamate 155, serine 179, and histidine 200 each coordinate 1-deoxy-D-xylulose 5-phosphate. Glutamate 155 lines the Mn(2+) pocket. Glycine 206 serves as a coordination point for NADPH. 1-deoxy-D-xylulose 5-phosphate is bound by residues serine 213, asparagine 218, lysine 219, and glutamate 222. Position 222 (glutamate 222) interacts with Mn(2+).

It belongs to the DXR family. Mg(2+) serves as cofactor. The cofactor is Mn(2+).

The enzyme catalyses 2-C-methyl-D-erythritol 4-phosphate + NADP(+) = 1-deoxy-D-xylulose 5-phosphate + NADPH + H(+). Its pathway is isoprenoid biosynthesis; isopentenyl diphosphate biosynthesis via DXP pathway; isopentenyl diphosphate from 1-deoxy-D-xylulose 5-phosphate: step 1/6. In terms of biological role, catalyzes the NADPH-dependent rearrangement and reduction of 1-deoxy-D-xylulose-5-phosphate (DXP) to 2-C-methyl-D-erythritol 4-phosphate (MEP). The protein is 1-deoxy-D-xylulose 5-phosphate reductoisomerase of Symbiobacterium thermophilum (strain DSM 24528 / JCM 14929 / IAM 14863 / T).